Here is a 392-residue protein sequence, read N- to C-terminus: Formate-dependent phosphoribosylglycinamide formyltransferase (392 aa).

N(1)-(5-phospho-beta-D-ribosyl)glycinamide-binding positions include 22–23 and Glu-82; that span reads EL. ATP is bound by residues Arg-114, Lys-155, 160–165, 195–198, and Glu-203; these read SSGKGQ and EGVV. One can recognise an ATP-grasp domain in the interval 119–308; that stretch reads RLAAEELQLP…EFALHVRAFL (190 aa). Glu-267 and Glu-279 together coordinate Mg(2+). Residues Asp-286, Lys-355, and 362 to 363 contribute to the N(1)-(5-phospho-beta-D-ribosyl)glycinamide site; that span reads RR.

It belongs to the PurK/PurT family. In terms of assembly, homodimer.

The catalysed reaction is N(1)-(5-phospho-beta-D-ribosyl)glycinamide + formate + ATP = N(2)-formyl-N(1)-(5-phospho-beta-D-ribosyl)glycinamide + ADP + phosphate + H(+). The protein operates within purine metabolism; IMP biosynthesis via de novo pathway; N(2)-formyl-N(1)-(5-phospho-D-ribosyl)glycinamide from N(1)-(5-phospho-D-ribosyl)glycinamide (formate route): step 1/1. Involved in the de novo purine biosynthesis. Catalyzes the transfer of formate to 5-phospho-ribosyl-glycinamide (GAR), producing 5-phospho-ribosyl-N-formylglycinamide (FGAR). Formate is provided by PurU via hydrolysis of 10-formyl-tetrahydrofolate. The sequence is that of Formate-dependent phosphoribosylglycinamide formyltransferase from Shigella dysenteriae serotype 1 (strain Sd197).